A 219-amino-acid chain; its full sequence is MLSMFMYNNIIDYVHVHDIEDEASDNDDRDYVYPLPENMVYRFDKSTNILDYLSTERDHVMMAVQYYMSKQRLDDLYRQLPTKTRSYVDIINTYCDKVNNDYNSDMNIMCDMASTESFTVYDINNEVNTILMNNKGLGVRLATISFITELGRRCMNPVETIKMFTLLSHTICDDYFVDYITYISAPRDNAIHSTREYLKIMGIAVIMFATYKTLKYMIG.

The protein belongs to the orthopoxvirus OPG045 family. As to quaternary structure, homodimer. Interacts with host pro-apoptotic protein BCL2L11 (via BH3 domain). Interacts with host NLRP1. Interacts with host BAK.

The protein localises to the host mitochondrion outer membrane. It localises to the host cytoplasm. Functionally, plays a role in evading host innate immune response by inhibiting host inflammasome activation. Interacts with and inhibits NLR-mediated interleukin-1 beta/IL1B production in infected cells. At the host mitochondria outer membrane, interacts with the BH3 domain of host BAK and prevents BAK from binding active BAX. In turn, host apoptosis is inhibited. This Cynomys gunnisoni (Gunnison's prairie dog) protein is Apoptosis regulator OPG045 (OPG045).